Here is a 475-residue protein sequence, read N- to C-terminus: 3-keto-steroid reductase ERG27 (475 aa).

NADP(+) is bound by residues Ile-32, Ile-55, Thr-59, and Lys-65. Residues Ser-249 and Tyr-272 each act as proton donor in the active site. NADP(+) is bound by residues Tyr-272, Lys-276, Val-324, and Ser-326. The active-site Lowers pKa of active site Tyr is Lys-276.

Belongs to the short-chain dehydrogenases/reductases (SDR) family. ERG27 subfamily. In terms of assembly, heterotetramer of ERG25, ERG26, ERG27 and ERG28. ERG28 acts as a scaffold to tether ERG27 and other 4,4-demethylation-related enzymes, forming a demethylation enzyme complex, in the endoplasmic reticulum.

The protein localises to the endoplasmic reticulum membrane. Its subcellular location is the lipid droplet. It functions in the pathway steroid metabolism; ergosterol biosynthesis. Its function is as follows. 3-keto-steroid reductase; part of the third module of ergosterol biosynthesis pathway that includes the late steps of the pathway. ERG27 is a catalytic component of the C-4 demethylation complex that catalyzes the conversion of 4,4-dimethylfecosterol into fecosterol via 4-methylfecosterol. The third module or late pathway involves the ergosterol synthesis itself through consecutive reactions that mainly occur in the endoplasmic reticulum (ER) membrane. Firstly, the squalene synthase ERG9 catalyzes the condensation of 2 farnesyl pyrophosphate moieties to form squalene, which is the precursor of all steroids. Squalene synthase is crucial for balancing the incorporation of farnesyl diphosphate (FPP) into sterol and nonsterol isoprene synthesis. Secondly, squalene is converted into lanosterol by the consecutive action of the squalene epoxidase ERG1 and the lanosterol synthase ERG7. Then, the delta(24)-sterol C-methyltransferase ERG6 methylates lanosterol at C-24 to produce eburicol. Eburicol is the substrate of the sterol 14-alpha demethylase encoded by CYP51A, CYP51B and CYP51C, to yield 4,4,24-trimethyl ergosta-8,14,24(28)-trienol. CYP51B encodes the enzyme primarily responsible for sterol 14-alpha-demethylation, and plays an essential role in ascospore formation. CYP51A encodes an additional sterol 14-alpha-demethylase, induced on ergosterol depletion and responsible for the intrinsic variation in azole sensitivity. The third CYP51 isoform, CYP51C, does not encode a sterol 14-alpha-demethylase, but is required for full virulence on host wheat ears. The C-14 reductase ERG24 then reduces the C14=C15 double bond which leads to 4,4-dimethylfecosterol. A sequence of further demethylations at C-4, involving the C-4 demethylation complex containing the C-4 methylsterol oxidases ERG25, the sterol-4-alpha-carboxylate 3-dehydrogenase ERG26 and the 3-keto-steroid reductase ERG27, leads to the production of fecosterol via 4-methylfecosterol. ERG28 has a role as a scaffold to help anchor ERG25, ERG26 and ERG27 to the endoplasmic reticulum. The C-8 sterol isomerase ERG2 then catalyzes the reaction which results in unsaturation at C-7 in the B ring of sterols and thus converts fecosterol to episterol. The sterol-C5-desaturases ERG3A and ERG3BB then catalyze the introduction of a C-5 double bond in the B ring to produce 5-dehydroepisterol. The C-22 sterol desaturases ERG5A and ERG5B further convert 5-dehydroepisterol into ergosta-5,7,22,24(28)-tetraen-3beta-ol by forming the C-22(23) double bond in the sterol side chain. Finally, ergosta-5,7,22,24(28)-tetraen-3beta-ol is substrate of the C-24(28) sterol reductase ERG4 to produce ergosterol. The chain is 3-keto-steroid reductase ERG27 from Gibberella zeae (strain ATCC MYA-4620 / CBS 123657 / FGSC 9075 / NRRL 31084 / PH-1) (Wheat head blight fungus).